Here is a 255-residue protein sequence, read N- to C-terminus: Hydroxyacylglutathione hydrolase (255 aa).

Positions 56, 58, 60, 61, 114, 133, and 171 each coordinate Zn(2+).

Belongs to the metallo-beta-lactamase superfamily. Glyoxalase II family. Monomer. Requires Zn(2+) as cofactor.

The enzyme catalyses an S-(2-hydroxyacyl)glutathione + H2O = a 2-hydroxy carboxylate + glutathione + H(+). It functions in the pathway secondary metabolite metabolism; methylglyoxal degradation; (R)-lactate from methylglyoxal: step 2/2. In terms of biological role, thiolesterase that catalyzes the hydrolysis of S-D-lactoyl-glutathione to form glutathione and D-lactic acid. This is Hydroxyacylglutathione hydrolase from Roseobacter denitrificans (strain ATCC 33942 / OCh 114) (Erythrobacter sp. (strain OCh 114)).